Here is a 342-residue protein sequence, read N- to C-terminus: Methionine import ATP-binding protein MetN 3 (342 aa).

Positions 2-241 (ISLKGISKTF…PKEQMTKEFV (240 aa)) constitute an ABC transporter domain. An ATP-binding site is contributed by 38-45 (GYSGAGKS).

The protein belongs to the ABC transporter superfamily. Methionine importer (TC 3.A.1.24) family. In terms of assembly, the complex is composed of two ATP-binding proteins (MetN), two transmembrane proteins (MetI) and a solute-binding protein (MetQ).

It is found in the cell membrane. The catalysed reaction is L-methionine(out) + ATP + H2O = L-methionine(in) + ADP + phosphate + H(+). It carries out the reaction D-methionine(out) + ATP + H2O = D-methionine(in) + ADP + phosphate + H(+). Its function is as follows. Part of the ABC transporter complex MetNIQ involved in methionine import. Responsible for energy coupling to the transport system. This Shouchella clausii (strain KSM-K16) (Alkalihalobacillus clausii) protein is Methionine import ATP-binding protein MetN 3.